The chain runs to 495 residues: Protein adenylyltransferase Fic (495 aa).

The segment at 1–23 (MGTEAEPPSPPSPPAQQQEQANP) is disordered. A helical transmembrane segment spans residues 36–58 (LYRLVLFFIAGSLTAWMFHAFSS). TPR repeat units lie at residues 121-154 (ALVS…APRH) and 155-189 (PEVL…SPSN). Positions 246-251 (SVGIEG) match the Inhibitory (S/T)XXXE(G/N) motif motif. Residues glutamate 250 and 331–334 (VGGH) contribute to the ATP site. Residues 300–435 (ITIKDILELH…IRPFVRFIAD (136 aa)) form the Fido domain. Histidine 378 is a catalytic residue. ATP-binding positions include 382–389 (DGNGRTSR), 414–415 (YY), and asparagine 422.

Belongs to the fic family. Homodimer.

It is found in the membrane. The enzyme catalyses L-tyrosyl-[protein] + ATP = O-(5'-adenylyl)-L-tyrosyl-[protein] + diphosphate. It carries out the reaction L-threonyl-[protein] + ATP = 3-O-(5'-adenylyl)-L-threonyl-[protein] + diphosphate. It catalyses the reaction 3-O-(5'-adenylyl)-L-threonyl-[protein] + H2O = L-threonyl-[protein] + AMP + H(+). With respect to regulation, the side chain of Glu-250 determines which of the two opposing activities (AMPylase or de-AMPylase) will take place. In response to endoplasmic reticulum stress, mediates de-AMPylase activity. Adenylyltransferase activity is inhibited by the inhibitory helix present at the N-terminus: Glu-250 binds ATP and competes with ATP-binding at Arg-389, thereby preventing adenylyltransferase activity. In unstressed cells, disengagement of Glu-250 promotes adenylyltransferase activity. Activation dissociates ATP-binding from Glu-250, allowing ordered binding of the entire ATP moiety with the alpha-phosphate in an orientation that is productive for accepting an incoming target hydroxyl side chain. Protein that can both mediate the addition of adenosine 5'-monophosphate (AMP) to specific residues of target proteins (AMPylation), and the removal of the same modification from target proteins (de-AMPylation), depending on the context. The side chain of Glu-250 determines which of the two opposing activities (AMPylase or de-AMPylase) will take place. Acts as a key regulator of the unfolded protein response (UPR) by mediating AMPylation or de-AMPylation of Hsc70-3/BiP. In unstressed cells, acts as an adenylyltransferase by mediating AMPylation of Hsc70-3/BiP at 'Thr-518', thereby inactivating it. In response to endoplasmic reticulum stress, acts as a phosphodiesterase by mediating removal of ATP (de-AMPylation) from Hsc70-3/BiP at 'Thr-518', leading to restore HSPA5/BiP activity. This chain is Protein adenylyltransferase Fic, found in Drosophila erecta (Fruit fly).